Reading from the N-terminus, the 265-residue chain is Hydroxyethylthiazole kinase (265 aa).

Position 36 (methionine 36) interacts with substrate. ATP-binding residues include lysine 112 and serine 160. Glycine 187 contacts substrate.

Belongs to the Thz kinase family. It depends on Mg(2+) as a cofactor.

It catalyses the reaction 5-(2-hydroxyethyl)-4-methylthiazole + ATP = 4-methyl-5-(2-phosphooxyethyl)-thiazole + ADP + H(+). It participates in cofactor biosynthesis; thiamine diphosphate biosynthesis; 4-methyl-5-(2-phosphoethyl)-thiazole from 5-(2-hydroxyethyl)-4-methylthiazole: step 1/1. Functionally, catalyzes the phosphorylation of the hydroxyl group of 4-methyl-5-beta-hydroxyethylthiazole (THZ). The chain is Hydroxyethylthiazole kinase from Clostridium perfringens (strain ATCC 13124 / DSM 756 / JCM 1290 / NCIMB 6125 / NCTC 8237 / Type A).